Here is a 909-residue protein sequence, read N- to C-terminus: Tubulin polyglutamylase TTLL7 (909 aa).

One can recognise a TTL domain in the interval Asn-40 to Ala-392. Residues Lys-162, Met-168–Gly-169, Gln-190–Leu-193, and Lys-203–Asp-205 contribute to the ATP site. Position 229 (Arg-229) interacts with L-glutamate. Thr-251–Asn-252 contacts ATP. L-glutamate contacts are provided by Tyr-253, Ser-254, and Lys-273. Residues Asp-338, Glu-351, and Asn-353 each coordinate Mg(2+). Position 369 (Lys-369) interacts with L-glutamate. A c-MTBD region region spans residues Asn-390 to His-452. 2 disordered regions span residues Asp-517–Tyr-580 and Lys-603–Ser-688. Over residues Glu-518–Arg-531 the composition is skewed to basic and acidic residues. Polar residues predominate over residues Thr-532 to Thr-542. Over residues Asn-548–Ser-562 the composition is skewed to low complexity. Over residues Lys-571–Tyr-580 the composition is skewed to basic and acidic residues. Positions Ala-604–Ser-625 are enriched in low complexity. Polar residues predominate over residues Cys-626–Leu-657. Residues Ser-658–Arg-673 are compositionally biased toward low complexity. The span at Val-674–Ser-688 shows a compositional bias: polar residues.

Belongs to the tubulin--tyrosine ligase family. In terms of assembly, interacts with both alpha- and beta-tubulin (via C-terminal tubulin tails). It depends on Mg(2+) as a cofactor.

It localises to the cell projection. Its subcellular location is the cilium. The protein resides in the cytoplasm. The protein localises to the cytoskeleton. It is found in the cilium basal body. It localises to the dendrite. Its subcellular location is the perikaryon. It carries out the reaction L-glutamyl-[protein] + L-glutamate + ATP = gamma-L-glutamyl-L-glutamyl-[protein] + ADP + phosphate + H(+). The catalysed reaction is (L-glutamyl)(n)-gamma-L-glutamyl-L-glutamyl-[protein] + L-glutamate + ATP = (L-glutamyl)(n+1)-gamma-L-glutamyl-L-glutamyl-[protein] + ADP + phosphate + H(+). In terms of biological role, polyglutamylase which modifies tubulin, generating polyglutamate side chains of variable lengths on the gamma-carboxyl group of specific glutamate residues within the C-terminal tail of tubulin. Mediates both ATP-dependent initiation and elongation steps of the polyglutamylation reaction. Preferentially modifies the beta-tubulin tail over an alpha-tail. Competes with monoglycylase TTLL3 for modification site on beta-tubulin substrate, thereby creating an anticorrelation between glycylation and glutamylation reactions. This chain is Tubulin polyglutamylase TTLL7, found in Xenopus tropicalis (Western clawed frog).